We begin with the raw amino-acid sequence, 213 residues long: MKKQKTSGNQKPKVSYRINEQIRVPEVRVVFPEGGMQVMKTQDARRMAEERGIDLIEVQPNAQPPVCKLENYGKLIYKMDKKDKDLKKKQKTTSLKELRFHPNTDKHDFDFKTAHLEEFLRKGNRVRATIVFLGRSIIYKDKGFELADRLTERLSTVANRDGEPKFEGKKLFVYFEPDKKKIEQFEKQRAMAEKIASLPPLPPDNSGEPEDDE.

Positions 193-213 (EKIASLPPLPPDNSGEPEDDE) are disordered.

The protein belongs to the IF-3 family. In terms of assembly, monomer.

The protein resides in the cytoplasm. In terms of biological role, IF-3 binds to the 30S ribosomal subunit and shifts the equilibrium between 70S ribosomes and their 50S and 30S subunits in favor of the free subunits, thus enhancing the availability of 30S subunits on which protein synthesis initiation begins. In Chlorobaculum tepidum (strain ATCC 49652 / DSM 12025 / NBRC 103806 / TLS) (Chlorobium tepidum), this protein is Translation initiation factor IF-3.